The following is a 79-amino-acid chain: Sigma-O factor regulatory protein RsoA (79 aa).

Together with RNA polymerase sigma factor SigO, positively regulates the expression of at least three operons, including oxdC-yvrL, sigO-rsoA and yvrJ. Required for the acid stress-dependent induction of the oxalate decarboxylase oxdC. This is Sigma-O factor regulatory protein RsoA (rsoA) from Bacillus subtilis (strain 168).